The primary structure comprises 639 residues: Mediator of RNA polymerase II transcription subunit 17 (639 aa).

The span at 32-43 (ASATVTTNGTTA) shows a compositional bias: polar residues. 2 disordered regions span residues 32–68 (ASATVTTNGTTADSSEDSGSQQSVSSAPIQQNSEEHS) and 130–159 (MGDADEESDLKPQEITDDDSNARLKPNNDS). Residues 48-57 (DSGSQQSVSS) show a composition bias toward low complexity. The segment covering 58-68 (APIQQNSEEHS) has biased composition (polar residues). The stretch at 245-271 (WKLRSLEDSKALLKENYAKLQKSLEVE) forms a coiled coil.

Belongs to the Mediator complex subunit 17 family. Component of the Mediator complex.

The protein localises to the nucleus. Its function is as follows. Component of the Mediator complex, a coactivator involved in the regulated transcription of nearly all RNA polymerase II-dependent genes. Mediator functions as a bridge to convey information from gene-specific regulatory proteins to the basal RNA polymerase II transcription machinery. Mediator is recruited to promoters by direct interactions with regulatory proteins and serves as a scaffold for the assembly of a functional preinitiation complex with RNA polymerase II and the general transcription factors. The sequence is that of Mediator of RNA polymerase II transcription subunit 17 (SRB4) from Eremothecium gossypii (strain ATCC 10895 / CBS 109.51 / FGSC 9923 / NRRL Y-1056) (Yeast).